Here is a 319-residue protein sequence, read N- to C-terminus: Ribonuclease Z (319 aa).

Histidine 62, histidine 64, aspartate 66, histidine 67, histidine 145, aspartate 215, and histidine 273 together coordinate Zn(2+). The active-site Proton acceptor is the aspartate 66.

Belongs to the RNase Z family. In terms of assembly, homodimer. Requires Zn(2+) as cofactor.

It catalyses the reaction Endonucleolytic cleavage of RNA, removing extra 3' nucleotides from tRNA precursor, generating 3' termini of tRNAs. A 3'-hydroxy group is left at the tRNA terminus and a 5'-phosphoryl group is left at the trailer molecule.. Functionally, zinc phosphodiesterase, which displays some tRNA 3'-processing endonuclease activity. Probably involved in tRNA maturation, by removing a 3'-trailer from precursor tRNA. In Borrelia garinii subsp. bavariensis (strain ATCC BAA-2496 / DSM 23469 / PBi) (Borreliella bavariensis), this protein is Ribonuclease Z.